A 176-amino-acid polypeptide reads, in one-letter code: Pro-glucagon (176 aa).

Residues 1–20 form the signal peptide; it reads MKSLYFVAGLLVMLAQGSWQ. A compositionally biased stretch (polar residues) spans 25-35; it reads NTEEKSSSFPA. The disordered stretch occupies residues 25–59; sequence NTEEKSSSFPAPQTDPLGDPDQISEDKRHSQGTFT. Ser54 carries the post-translational modification Phosphoserine. Positions 84 to 89 are excised as a propeptide; it reads NKNNIA. 2 positions are modified to phosphoserine: Ser105 and Ser108. Arg127 is subject to Arginine amide. The propeptide occupies 131 to 145; that stretch reads DFPEEVNIVEELRRR. Phosphoserine is present on residues Ser150 and Ser152.

It belongs to the glucagon family. Post-translationally, proglucagon is post-translationally processed in a tissue-specific manner in pancreatic A cells and intestinal L cells. In pancreatic A cells, the major bioactive hormone is glucagon cleaved by PCSK2/PC2. In the intestinal L cells PCSK1/PC1 liberates GLP-1, GLP-2, glicentin and oxyntomodulin. GLP-1 is further N-terminally truncated by post-translational processing in the intestinal L cells resulting in GLP-1(7-37) GLP-1-(7-36)amide. The C-terminal amidation is neither important for the metabolism of GLP-1 nor for its effects on the endocrine pancreas. Glucagon is secreted in the A cells of the islets of Langerhans. GLP-1, GLP-2, oxyntomodulin and glicentin are secreted from enteroendocrine cells throughout the gastrointestinal tract. GLP-1 and GLP-2 are also secreted in selected neurons in the brain.

It localises to the secreted. Plays a key role in glucose metabolism and homeostasis. Regulates blood glucose by increasing gluconeogenesis and decreasing glycolysis. A counterregulatory hormone of insulin, raises plasma glucose levels in response to insulin-induced hypoglycemia. Plays an important role in initiating and maintaining hyperglycemic conditions in diabetes. Functionally, potent stimulator of glucose-dependent insulin release. Also stimulates insulin release in response to IL6. Plays important roles on gastric motility and the suppression of plasma glucagon levels. May be involved in the suppression of satiety and stimulation of glucose disposal in peripheral tissues, independent of the actions of insulin. Has growth-promoting activities on intestinal epithelium. May also regulate the hypothalamic pituitary axis (HPA) via effects on LH, TSH, CRH, oxytocin, and vasopressin secretion. Increases islet mass through stimulation of islet neogenesis and pancreatic beta cell proliferation. Inhibits beta cell apoptosis. Its function is as follows. Stimulates intestinal growth and up-regulates villus height in the small intestine, concomitant with increased crypt cell proliferation and decreased enterocyte apoptosis. The gastrointestinal tract, from the stomach to the colon is the principal target for GLP-2 action. Plays a key role in nutrient homeostasis, enhancing nutrient assimilation through enhanced gastrointestinal function, as well as increasing nutrient disposal. Stimulates intestinal glucose transport and decreases mucosal permeability. In terms of biological role, significantly reduces food intake. Inhibits gastric emptying in humans. Suppression of gastric emptying may lead to increased gastric distension, which may contribute to satiety by causing a sensation of fullness. May modulate gastric acid secretion and the gastro-pyloro-duodenal activity. May play an important role in intestinal mucosal growth in the early period of life. The protein is Pro-glucagon (GCG) of Ovis aries (Sheep).